The primary structure comprises 498 residues: Flavin-dependent halogenase otaD (498 aa).

The FAD site is built by G14, G17, and E47. Chloride contacts are provided by S326 and G327. Residue V328 participates in FAD binding.

It belongs to the flavin-dependent halogenase family.

The catalysed reaction is ochratoxin B + FADH2 + chloride + O2 = ochratoxin A + FAD + 2 H2O. It participates in mycotoxin biosynthesis. Flavin-dependent halogenase; part of the gene cluster that mediates the biosynthesis of ochratoxin A (OTA), a mycotoxin composed of a chlorinated type I polyketide dihydroisocoumarin moiety linked to L-phenylalanine, and demonstrated to have nephrotoxic, immunotoxic, genotoxic, neurotoxic, and teratogenic properties. OtaD chlorinates ochratoxin B (OTB) at the C-5 position to form OTA. The pathway begins with the highly reducing polyketide synthase otaA that catalyzes the formation of the isocoumarin group during the initial stages of biosynthesis, starting from one acetate and 4 malonate units, to originate the characteristic pentaketide skeleton 7-methylmellein (7-MM) of the OTA molecule. The newly identified cyclase otaY might be involved in the polyketide cyclization reaction during the initial steps of the OTA biosynthesis. 7-MM is then oxidized into 7-carboxymellein (also called ochratoxin beta) by the cytochrome P450 monooxygenase otaC. The NRPS encoded by the otaB gene is involved in the linking of phenylalanine to the dihydroisocoumarin ring. The reaction catalyzed by NRPS results in the production of ochratoxin B (OTB), which is the non-chlorinated analog of OTA and which subsequently serves as the substrate of the halogenase otaD for chlorination activity to form the final molecular structure of OTA, containing a chlorine atom in the C-5 position of the molecule. The sequence is that of Flavin-dependent halogenase otaD from Aspergillus carbonarius (strain ITEM 5010).